The chain runs to 329 residues: MVKTQRVVITPGEPAGIGPDLVVQLAQREWPVELVVCADATLLTDRAAMLGLPLTLRPYSPNSPAQPQTTGTLTLLPVALRESVTAGQLAIENGHYVVETLARACDGCLNGEFAALITGPVHKGVINDAGIPFTGHTEFFEERSQAKKVVMMLATEELRVALATTHLPLRDIADAITPALLHEVIAILHHDLRTKFGIAEPRILVCGLNPHAGEGGHMGTEEIDTIIPVLDELRAQGMKLNGPLPADTLFQPKYLDNADAVLAMYHDQGLPVLKYQGFGRGVNITLGLPFIRTSVDHGTALELAGRGEADVGSFITALNLAIKMIVNTQ.

Substrate-binding residues include histidine 136 and threonine 137. The a divalent metal cation site is built by histidine 166, histidine 211, and histidine 266. 3 residues coordinate substrate: lysine 274, asparagine 283, and arginine 292.

This sequence belongs to the PdxA family. Homodimer. Zn(2+) is required as a cofactor. The cofactor is Mg(2+). Co(2+) serves as cofactor.

It is found in the cytoplasm. It carries out the reaction 4-(phosphooxy)-L-threonine + NAD(+) = 3-amino-2-oxopropyl phosphate + CO2 + NADH. Its pathway is cofactor biosynthesis; pyridoxine 5'-phosphate biosynthesis; pyridoxine 5'-phosphate from D-erythrose 4-phosphate: step 4/5. Its function is as follows. Catalyzes the NAD(P)-dependent oxidation of 4-(phosphooxy)-L-threonine (HTP) into 2-amino-3-oxo-4-(phosphooxy)butyric acid which spontaneously decarboxylates to form 3-amino-2-oxopropyl phosphate (AHAP). This Escherichia coli O139:H28 (strain E24377A / ETEC) protein is 4-hydroxythreonine-4-phosphate dehydrogenase.